Here is a 190-residue protein sequence, read N- to C-terminus: Segregation and condensation protein B (190 aa).

The protein belongs to the ScpB family. In terms of assembly, homodimer. Homodimerization may be required to stabilize the binding of ScpA to the Smc head domains. Component of a cohesin-like complex composed of ScpA, ScpB and the Smc homodimer, in which ScpA and ScpB bind to the head domain of Smc. The presence of the three proteins is required for the association of the complex with DNA.

Its subcellular location is the cytoplasm. In terms of biological role, participates in chromosomal partition during cell division. May act via the formation of a condensin-like complex containing Smc and ScpA that pull DNA away from mid-cell into both cell halves. The polypeptide is Segregation and condensation protein B (Bacillus cereus (strain ATCC 10987 / NRS 248)).